Here is a 611-residue protein sequence, read N- to C-terminus: MFS siderochrome iron transporter C (611 aa).

Residues 1–25 (MPFLDHRTGPSYGTIDQMEQHSDDE) are disordered. N-linked (GlcNAc...) asparagine glycosylation is present at Asn-62. Transmembrane regions (helical) follow at residues 71-91 (VIAY…GQTV), 107-127 (LIST…PPMA), 136-156 (FEAF…MAAS), 165-185 (AQIF…VFIA), 194-214 (AFLA…GPTI), 228-248 (YGMW…SLLL), 282-302 (MGGL…LTLA), 313-333 (SIVA…FWES), 353-373 (ALAG…SVQP), 393-413 (VTQT…ILIK), 418-438 (YRAF…LMMV), 449-469 (ILVT…PVQL), 486-506 (MFLT…GAVW), and 560-580 (LLIL…AMED). Residues 592–611 (VDPVPAEEGEIEPNRHVKRT) form a disordered region.

The protein belongs to the major facilitator superfamily.

It is found in the membrane. Functionally, major facilitator transporter that contributes to the maintenance of intracellular siderophore ferricrocin (FC) levels. Plays a role in conidiation and confers protection against oxidative stress. Also contributes to fungal virulence in the Galleria mellonella animal model system. Does not appear to play a role in either siderophore export or uptake. This chain is MFS siderochrome iron transporter C, found in Aspergillus fumigatus (strain ATCC MYA-4609 / CBS 101355 / FGSC A1100 / Af293) (Neosartorya fumigata).